Here is a 633-residue protein sequence, read N- to C-terminus: Glutamyl-tRNA(Gln) amidotransferase subunit E (633 aa).

This sequence belongs to the GatB/GatE family. GatE subfamily. Heterodimer of GatD and GatE.

It carries out the reaction L-glutamyl-tRNA(Gln) + L-glutamine + ATP + H2O = L-glutaminyl-tRNA(Gln) + L-glutamate + ADP + phosphate + H(+). Its function is as follows. Allows the formation of correctly charged Gln-tRNA(Gln) through the transamidation of misacylated Glu-tRNA(Gln) in organisms which lack glutaminyl-tRNA synthetase. The reaction takes place in the presence of glutamine and ATP through an activated gamma-phospho-Glu-tRNA(Gln). The GatDE system is specific for glutamate and does not act on aspartate. This chain is Glutamyl-tRNA(Gln) amidotransferase subunit E, found in Methanosarcina acetivorans (strain ATCC 35395 / DSM 2834 / JCM 12185 / C2A).